The sequence spans 212 residues: Uracil phosphoribosyltransferase (212 aa).

5-phospho-alpha-D-ribose 1-diphosphate-binding positions include Arg78, Arg103, and 130 to 138; that span reads DPMLATGGS. Residues Ile193 and 198–200 each bind uracil; that span reads GDA. Residue Asp199 participates in 5-phospho-alpha-D-ribose 1-diphosphate binding.

It belongs to the UPRTase family. Mg(2+) is required as a cofactor.

The enzyme catalyses UMP + diphosphate = 5-phospho-alpha-D-ribose 1-diphosphate + uracil. The protein operates within pyrimidine metabolism; UMP biosynthesis via salvage pathway; UMP from uracil: step 1/1. With respect to regulation, allosterically activated by GTP. Functionally, catalyzes the conversion of uracil and 5-phospho-alpha-D-ribose 1-diphosphate (PRPP) to UMP and diphosphate. The polypeptide is Uracil phosphoribosyltransferase (Bordetella petrii (strain ATCC BAA-461 / DSM 12804 / CCUG 43448)).